Reading from the N-terminus, the 382-residue chain is Galactokinase (382 aa).

34-37 (EHTD) provides a ligand contact to substrate. ATP is bound at residue 124–130 (GAGLSSS). Mg(2+) contacts are provided by serine 130 and glutamate 162. Residue aspartate 174 is the Proton acceptor of the active site. Substrate is bound at residue tyrosine 223.

It belongs to the GHMP kinase family. GalK subfamily.

It localises to the cytoplasm. The enzyme catalyses alpha-D-galactose + ATP = alpha-D-galactose 1-phosphate + ADP + H(+). Its pathway is carbohydrate metabolism; galactose metabolism. Functionally, catalyzes the transfer of the gamma-phosphate of ATP to D-galactose to form alpha-D-galactose-1-phosphate (Gal-1-P). This Salmonella agona (strain SL483) protein is Galactokinase.